Here is a 767-residue protein sequence, read N- to C-terminus: 5-methyltetrahydropteroyltriglutamate--homocysteine methyltransferase (767 aa).

Positions 19 and 126 each coordinate 5-methyltetrahydropteroyltri-L-glutamate. Residues 446–448 (IGS) and Glu499 contribute to the L-homocysteine site. Residues 446–448 (IGS) and Glu499 each bind L-methionine. Residues Asp504, Tyr527, 530–531 (RY), and Trp576 each bind 5-methyltetrahydropteroyltri-L-glutamate. Asp614 serves as a coordination point for L-homocysteine. Asp614 contributes to the L-methionine binding site. Residues His657, Cys659, and Glu679 each contribute to the Zn(2+) site. Catalysis depends on His707, which acts as the Proton donor. Position 739 (Cys739) interacts with Zn(2+).

The protein belongs to the vitamin-B12 independent methionine synthase family. Requires Zn(2+) as cofactor.

It catalyses the reaction 5-methyltetrahydropteroyltri-L-glutamate + L-homocysteine = tetrahydropteroyltri-L-glutamate + L-methionine. It functions in the pathway amino-acid biosynthesis; L-methionine biosynthesis via de novo pathway; L-methionine from L-homocysteine (MetE route): step 1/1. Inhibited weakly by methotrexate. Functionally, catalyzes the transfer of a methyl group from 5-methyltetrahydrofolate to homocysteine resulting in methionine formation. This is 5-methyltetrahydropteroyltriglutamate--homocysteine methyltransferase from Candida albicans (strain SC5314 / ATCC MYA-2876) (Yeast).